The sequence spans 396 residues: NADH-quinone oxidoreductase subunit D 1 (396 aa).

Belongs to the complex I 49 kDa subunit family. NDH-1 is composed of 14 different subunits. Subunits NuoB, C, D, E, F, and G constitute the peripheral sector of the complex.

It is found in the cell inner membrane. It catalyses the reaction a quinone + NADH + 5 H(+)(in) = a quinol + NAD(+) + 4 H(+)(out). In terms of biological role, NDH-1 shuttles electrons from NADH, via FMN and iron-sulfur (Fe-S) centers, to quinones in the respiratory chain. The immediate electron acceptor for the enzyme in this species is believed to be ubiquinone. Couples the redox reaction to proton translocation (for every two electrons transferred, four hydrogen ions are translocated across the cytoplasmic membrane), and thus conserves the redox energy in a proton gradient. This Beijerinckia indica subsp. indica (strain ATCC 9039 / DSM 1715 / NCIMB 8712) protein is NADH-quinone oxidoreductase subunit D 1.